The sequence spans 497 residues: Guanosine-5'-triphosphate,3'-diphosphate pyrophosphatase (497 aa).

Belongs to the GppA/Ppx family. GppA subfamily.

The catalysed reaction is guanosine 3'-diphosphate 5'-triphosphate + H2O = guanosine 3',5'-bis(diphosphate) + phosphate + H(+). It participates in purine metabolism; ppGpp biosynthesis; ppGpp from GTP: step 2/2. Catalyzes the conversion of pppGpp to ppGpp. Guanosine pentaphosphate (pppGpp) is a cytoplasmic signaling molecule which together with ppGpp controls the 'stringent response', an adaptive process that allows bacteria to respond to amino acid starvation, resulting in the coordinated regulation of numerous cellular activities. The chain is Guanosine-5'-triphosphate,3'-diphosphate pyrophosphatase from Vibrio cholerae serotype O1 (strain ATCC 39541 / Classical Ogawa 395 / O395).